Consider the following 739-residue polypeptide: Catalase-peroxidase (739 aa).

A disordered region spans residues 1–33 (MSVEHPPIGEANTEPAAGGCPVTGRLRHPLQGG). The tryptophyl-tyrosyl-methioninium (Trp-Tyr) (with M-255) cross-link spans 106 to 229 (WHSAGTYRSS…LAAVQMGLIY (124 aa)). Catalysis depends on H107, which acts as the Proton acceptor. The disordered stretch occupies residues 113 to 134 (RSSDGRGGANTGQQRFAPLNSW). A cross-link (tryptophyl-tyrosyl-methioninium (Tyr-Met) (with W-106)) is located at residues 229-255 (YVNPEGPNGNPDPLAAAVDIKDTFGRM). A heme b-binding site is contributed by H270.

It belongs to the peroxidase family. Peroxidase/catalase subfamily. Homodimer or homotetramer. Heme b is required as a cofactor. Formation of the three residue Trp-Tyr-Met cross-link is important for the catalase, but not the peroxidase activity of the enzyme.

It carries out the reaction H2O2 + AH2 = A + 2 H2O. The enzyme catalyses 2 H2O2 = O2 + 2 H2O. In terms of biological role, bifunctional enzyme with both catalase and broad-spectrum peroxidase activity. The sequence is that of Catalase-peroxidase from Nocardia farcinica (strain IFM 10152).